The following is a 428-amino-acid chain: Aspartic protease 10 (428 aa).

A signal peptide spans 1–16 (MKTFIALLALLTVVSA). The Peptidase A1 domain occupies 72–425 (YMVQISLGSP…DMKSGRLGLA (354 aa)). Aspartate 90 is an active-site residue. Residues asparagine 155 and asparagine 191 are each glycosylated (N-linked (GlcNAc...) asparagine). Aspartate 318 is an active-site residue. Cysteine 353 and cysteine 385 are joined by a disulfide.

The protein belongs to the peptidase A1 family. In terms of processing, proteolytically cleaved. As to expression, synthesized in the intestine. When secreted in low heme conditions, localizes to neurons near the anterior and posterior regions of the body and in coelomocytes.

The protein localises to the secreted. Functionally, aspartic protease which plays a role in heme homeostasis and mediates inter-organ signaling between the intestine and extra-intestinal tissues when cellular heme levels are low. In Caenorhabditis elegans, this protein is Aspartic protease 10.